Here is a 101-residue protein sequence, read N- to C-terminus: Small ribosomal subunit protein uS14 (101 aa).

Belongs to the universal ribosomal protein uS14 family. Part of the 30S ribosomal subunit. Contacts proteins S3 and S10.

Its function is as follows. Binds 16S rRNA, required for the assembly of 30S particles and may also be responsible for determining the conformation of the 16S rRNA at the A site. The chain is Small ribosomal subunit protein uS14 from Escherichia coli O139:H28 (strain E24377A / ETEC).